We begin with the raw amino-acid sequence, 442 residues long: Dihydrolipoyllysine-residue acetyltransferase component of pyruvate dehydrogenase complex (442 aa).

The Lipoyl-binding domain maps to 2-77 (AFEFKLPDIG…TVGQTIITFD (76 aa)). Lys-43 carries the N6-lipoyllysine modification. A compositionally biased stretch (basic and acidic residues) spans 84-97 (LQFKGSDESDDAKT). Residues 84–136 (LQFKGSDESDDAKTEAQVQSTAEAGQDVAKEEQAQEPAKATGAGQQDQAEVDP) form a disordered region. A Peripheral subunit-binding (PSBD) domain is found at 141–178 (IAMPSVRKYAREKGVDIRKVTGSGNNGRVVKEDIDSFV). A compositionally biased stretch (low complexity) spans 182–208 (AQEAAPQETAAPQETAAKPAAAPAPEG). The segment at 182–215 (AQEAAPQETAAPQETAAKPAAAPAPEGEFPETRE) is disordered. His-413 is a catalytic residue.

This sequence belongs to the 2-oxoacid dehydrogenase family. Forms a 24-polypeptide structural core with octahedral symmetry. (R)-lipoate serves as cofactor.

It carries out the reaction N(6)-[(R)-dihydrolipoyl]-L-lysyl-[protein] + acetyl-CoA = N(6)-[(R)-S(8)-acetyldihydrolipoyl]-L-lysyl-[protein] + CoA. Functionally, the pyruvate dehydrogenase complex catalyzes the overall conversion of pyruvate to acetyl-CoA and CO(2). It contains multiple copies of three enzymatic components: pyruvate dehydrogenase (E1), dihydrolipoamide acetyltransferase (E2) and lipoamide dehydrogenase (E3). The B.subtilis PDH complex also possesses branched-chain 2-oxoacid dehydrogenase (BCDH) activity. This is Dihydrolipoyllysine-residue acetyltransferase component of pyruvate dehydrogenase complex (pdhC) from Bacillus subtilis (strain 168).